The chain runs to 245 residues: Probable phosphatase YcdX (245 aa).

Residues H7, H9, H15, H40, E73, H101, H131, D192, and H194 each coordinate Zn(2+).

It belongs to the PHP family. Homotrimer. Zn(2+) is required as a cofactor.

In Escherichia coli O127:H6 (strain E2348/69 / EPEC), this protein is Probable phosphatase YcdX.